The following is a 463-amino-acid chain: Chaperone SurA (463 aa).

The N-terminal stretch at 1-25 (MTKPFSVVLASLLAITSTISPLASA) is a signal peptide. PpiC domains are found at residues 174–276 (GSKY…KLME) and 289–388 (VTEY…QRVG). Disordered regions lie at residues 329–348 (ATAKESSEDTNSRGQGGDLG) and 434–463 (GDRADNNATAAPAKSADPALPAPPPAKPTR). The span at 439 to 452 (NNATAAPAKSADPA) shows a compositional bias: low complexity. Pro residues predominate over residues 453–463 (LPAPPPAKPTR).

The protein resides in the periplasm. The enzyme catalyses [protein]-peptidylproline (omega=180) = [protein]-peptidylproline (omega=0). Chaperone involved in the correct folding and assembly of outer membrane proteins. Recognizes specific patterns of aromatic residues and the orientation of their side chains, which are found more frequently in integral outer membrane proteins. May act in both early periplasmic and late outer membrane-associated steps of protein maturation. The sequence is that of Chaperone SurA from Xanthomonas oryzae pv. oryzae (strain MAFF 311018).